Reading from the N-terminus, the 958-residue chain is MVDIVDKALRMGEGRQIKKLENVAKATNALEDEIAALDDEELKGQTAKFKQRIENGESLDKLMPEAFATVREASKRTLGLRHFDVQLMGGAALHWGNIAEMKTGEGKTLVATLPAYLNALDGQGVHVVTVNDYLASYQAELMGRVYRFLGMSTGCIITNQKPPERRKQYNADITYGTNNEFGFDYLRDNMAWEKSDLVQRGHHYAIVDEVDSILIDEARTPLIISGPAEGDVTRWYRQFARLVLKLNRDEDYEVDEKKKVVGILDPGITKVEDYLGIDNLYEPNNTALIGYLNNAIKAKELFLRDRDYVVTGGEVLIVDEHTGRILPGRRYNEGLHQAIEAKEGVEVKAENQTFATITLQNYFRMYDKLAGMTGTAETEAAEFMGTYKLGVLPIPTNKPMIREDKDDLIFRTKKEKLAAIVRDVAKRHKKGQPVLLGTASVESSEVVSSLLDVAKIPHQVLNAKQHDKEAAVVAVAGRKGAVTVATNMAGRGTDIMLGGNVEFLADAKLKSEGYSPDDTPDEYEKRWPGTLAEIKDQVKDEHEEVVKLGGLYVLGTERHESRRIDNQLRGRSGRQGDPGESRFYLSLEDDLMRLFNTQLVARVMAKGMPEGEPIEAKSVSKGVRTAQKAVESRNFEIRKNVLKYDDVMNKQRTVIYAERQAVLKGADIHEDILKFIDDTVLSYIKGANNGSDKPADWDWDGLFKAISSVYPIAVEQEGAKDAVDKLKGDKAVEALKELIVSDAKDQYSDFEDKLGSEGLRQLERRVVLAVLDRKWREHLYEMDYLKDGIGLRGMGQRDPLVEYQREGYQMYNSMIEAIKEETIQLLFHVDIERVAMTEDEETESDEDEAVNAAEAVMGLDGEAAATGESAPAEPETDDEAEKTTIDELADEQKNEKGIVGMQPISHAEGKVPANKRPKSEELHSPWADGRTFPGTGKNAQCPCGSGRKYKMCHGQNEQ.

Residues Gln86, Gly104–Thr108, and Asp494 each bind ATP. 2 disordered regions span residues Ala863–Thr883 and Gln902–Lys937. Positions 941, 943, 952, and 953 each coordinate Zn(2+).

It belongs to the SecA family. As to quaternary structure, monomer and homodimer. Part of the essential Sec protein translocation apparatus which comprises SecA, SecYEG and auxiliary proteins SecDF. Other proteins may also be involved. The cofactor is Zn(2+).

It is found in the cell membrane. The protein localises to the cytoplasm. The enzyme catalyses ATP + H2O + cellular proteinSide 1 = ADP + phosphate + cellular proteinSide 2.. Its function is as follows. Part of the Sec protein translocase complex. Interacts with the SecYEG preprotein conducting channel. Has a central role in coupling the hydrolysis of ATP to the transfer of proteins into and across the cell membrane, serving as an ATP-driven molecular motor driving the stepwise translocation of polypeptide chains across the membrane. The polypeptide is Protein translocase subunit SecA (Bifidobacterium adolescentis (strain ATCC 15703 / DSM 20083 / NCTC 11814 / E194a)).